The sequence spans 186 residues: HGPRTase-like protein 3 (186 aa).

This sequence belongs to the purine/pyrimidine phosphoribosyltransferase family. Archaeal HPRT subfamily.

Its function is as follows. May catalyze a purine salvage reaction, the substrate is unknown. This chain is HGPRTase-like protein 3, found in Haloterrigena turkmenica (strain ATCC 51198 / DSM 5511 / JCM 9101 / NCIMB 13204 / VKM B-1734 / 4k) (Halococcus turkmenicus).